The following is a 140-amino-acid chain: Nucleoside diphosphate kinase (140 aa).

6 residues coordinate ATP: lysine 11, phenylalanine 59, arginine 87, threonine 93, arginine 104, and asparagine 114. Histidine 117 functions as the Pros-phosphohistidine intermediate in the catalytic mechanism.

The protein belongs to the NDK family. Homotetramer. Mg(2+) serves as cofactor.

It is found in the cytoplasm. The catalysed reaction is a 2'-deoxyribonucleoside 5'-diphosphate + ATP = a 2'-deoxyribonucleoside 5'-triphosphate + ADP. It catalyses the reaction a ribonucleoside 5'-diphosphate + ATP = a ribonucleoside 5'-triphosphate + ADP. Its function is as follows. Major role in the synthesis of nucleoside triphosphates other than ATP. The ATP gamma phosphate is transferred to the NDP beta phosphate via a ping-pong mechanism, using a phosphorylated active-site intermediate. The sequence is that of Nucleoside diphosphate kinase from Xanthobacter autotrophicus (strain ATCC BAA-1158 / Py2).